A 465-amino-acid chain; its full sequence is MADDKGQMMWGGRFAATPSAIMEEINASLDIDRRMAEEDVAGSRAHADMLAEMGILSVADNEAIQGGLDAVIEEMRAGTFPFRRELEDIHMNVEARLKELIGEPAGRLHTARSRNDQVITDFRLWTRRALDETGQLVAGLQAMLVRRADENTSTVMPGFTHLQTAQPVTLGHHLLAYVEMLERDRSRLLDCAVRLNECPLGAAALAGTGFPIDRDMTAEALGFARPMANSLDAVSARDFALEALSSLSIAATHLSRLAEEIVLWTSPQFGFARLSDQWSTGSSIMPQKRNPDAAELIRAKASLITGHFSALQGAIKALPLAYAKDLQDDKRLTFDAFDTFNLCVRAMTGMIETISFKPDAMRAAAAKGFSTATDLADWLVRELGMPFRDAHHVTGRIVARAEAKGVDLADLPLKEMQAVHSAITQEVYGVLSVEASAASRTSYGATSPVRVAEQVAQWKQRLRVE.

The protein belongs to the lyase 1 family. Argininosuccinate lyase subfamily.

The protein resides in the cytoplasm. It catalyses the reaction 2-(N(omega)-L-arginino)succinate = fumarate + L-arginine. The protein operates within amino-acid biosynthesis; L-arginine biosynthesis; L-arginine from L-ornithine and carbamoyl phosphate: step 3/3. The protein is Argininosuccinate lyase of Hyphomonas neptunium (strain ATCC 15444).